The following is a 78-amino-acid chain: Neurogranin (78 aa).

M1 is subject to N-acetylmethionine. The IQ domain maps to 26-49 (ANAAAAKIQASFRGHMARKKIKSG). The residue at position 36 (S36) is a Phosphoserine; by PHK and PKC. The interval 38–78 (RGHMARKKIKSGERGRKGPGPGGPGGAGGARGGAGGGPSGD) is disordered. One can recognise a Collagen-like domain in the interval 50–78 (ERGRKGPGPGGPGGAGGARGGAGGGPSGD). The span at 55–78 (GPGPGGPGGAGGARGGAGGGPSGD) shows a compositional bias: gly residues. R68 carries the post-translational modification Citrulline; partial. The residue at position 68 (R68) is an Omega-N-methylarginine.

The protein belongs to the neurogranin family. The N-terminus is blocked. Post-translationally, phosphorylated at Ser-36 by PHK and PKC. Phosphorylation prevents interaction with Calmodulin and interrupts several learning- and memory-associated functions. In terms of tissue distribution, is highly enriched in brain. Accumulates postsynaptically in dendritic spines of neostriatal neurons.

Acts as a 'third messenger' substrate of protein kinase C-mediated molecular cascades during synaptic development and remodeling. Binds to calmodulin in the absence of calcium. This is Neurogranin (NRGN) from Bos taurus (Bovine).